Consider the following 377-residue polypeptide: Cytochrome b (377 aa).

A run of 4 helical transmembrane segments spans residues F34–M54, W78–A100, T113–V133, and F179–L199. 2 residues coordinate heme b: H84 and H98. The heme b site is built by H183 and H197. Residue H202 coordinates a ubiquinone. Transmembrane regions (helical) follow at residues F225–L245, K288–Y308, M323–I343, and Q352–W372.

Belongs to the cytochrome b family. In terms of assembly, the main subunits of complex b-c1 are: cytochrome b, cytochrome c1 and the Rieske protein. Requires heme b as cofactor.

It is found in the mitochondrion inner membrane. In terms of biological role, component of the ubiquinol-cytochrome c reductase complex (complex III or cytochrome b-c1 complex) that is part of the mitochondrial respiratory chain. The b-c1 complex mediates electron transfer from ubiquinol to cytochrome c. Contributes to the generation of a proton gradient across the mitochondrial membrane that is then used for ATP synthesis. In Priapulus caudatus (Priapulid worm), this protein is Cytochrome b (mt:Cyt-b).